The sequence spans 67 residues: DNA-directed RNA polymerase subunit omega (67 aa).

The protein belongs to the RNA polymerase subunit omega family. The RNAP catalytic core consists of 2 alpha, 1 beta, 1 beta' and 1 omega subunit. When a sigma factor is associated with the core the holoenzyme is formed, which can initiate transcription.

The catalysed reaction is RNA(n) + a ribonucleoside 5'-triphosphate = RNA(n+1) + diphosphate. In terms of biological role, promotes RNA polymerase assembly. Latches the N- and C-terminal regions of the beta' subunit thereby facilitating its interaction with the beta and alpha subunits. The protein is DNA-directed RNA polymerase subunit omega of Listeria innocua serovar 6a (strain ATCC BAA-680 / CLIP 11262).